The sequence spans 433 residues: Hps1-dma1 cluster O-methyltransferase (433 aa).

Residues 36 to 55 are disordered; the sequence is NGHPERSLNSTDSVRLSDAP. Residue aspartate 285 coordinates S-adenosyl-L-methionine. Histidine 331 (proton acceptor) is an active-site residue.

This sequence belongs to the class I-like SAM-binding methyltransferase superfamily. Cation-independent O-methyltransferase family. COMT subfamily.

Its pathway is secondary metabolite biosynthesis. Functionally, O-methyltransferase; part of the hps1-dma1 gene cluster that probably mediates the biosynthesis a derivative of cyclopiazonic acid (CPA). The hybrid polyketide synthase-nonribosomal peptide synthetase (PKS-NRPS) nps1 might incorporates acetyl-CoA, malonyl-CoA, and tryptophan (Trp) and utilizes a C-terminal redox-incompetent reductase domain to make and release the tryptophan tetramic acid, cyclo-acetoacetyl-L-tryptophan (c-AATrp), as the first intermediate in the pathway. In addition, the cluster also includes the tryptophan dimethylallyltransferase dma1, the FAD-dependent oxidoreductase toxD, the cytochrome P450 monooxygenase cyp3.1 and the methyltransferase DOTSEDRAFT_139328; the latter 2 being not present in all CPA-producing fungi but involved in additional modifications that occur in biosynthesis the of a range of CPA and CPA-like products. Further studies are required to clarify whether the CPA-like hps1-dma1 cluster is functional or a non-functional relic reflecting evolution of D.septosporum. This chain is Hps1-dma1 cluster O-methyltransferase, found in Dothistroma septosporum (strain NZE10 / CBS 128990) (Red band needle blight fungus).